Here is a 228-residue protein sequence, read N- to C-terminus: Probable calcium-binding protein CML48 (228 aa).

2 consecutive EF-hand domains span residues 52–87 (ETHP…SGYD) and 121–156 (NCLA…LGCV). Ca(2+)-binding residues include D65, N67, S69, and E76.

Potential calcium sensor. The polypeptide is Probable calcium-binding protein CML48 (CML48) (Arabidopsis thaliana (Mouse-ear cress)).